A 125-amino-acid polypeptide reads, in one-letter code: Ribosome maturation factor RimP (125 aa).

The protein belongs to the RimP family.

Its subcellular location is the cytoplasm. Its function is as follows. Required for maturation of 30S ribosomal subunits. The polypeptide is Ribosome maturation factor RimP (Rickettsia canadensis (strain McKiel)).